Consider the following 1004-residue polypeptide: Glycine dehydrogenase (decarboxylating), mitochondrial (1004 aa).

The residue at position 738 (Lys738) is an N6-(pyridoxal phosphate)lysine.

It belongs to the GcvP family. Homodimer. Interacts with GCSH. The glycine cleavage system is composed of four proteins: P (GLDC), T (GCST), L (DLD) and H (GCSH). Pyridoxal 5'-phosphate serves as cofactor. Liver (at protein level).

The protein resides in the mitochondrion. The catalysed reaction is N(6)-[(R)-lipoyl]-L-lysyl-[glycine-cleavage complex H protein] + glycine + H(+) = N(6)-[(R)-S(8)-aminomethyldihydrolipoyl]-L-lysyl-[glycine-cleavage complex H protein] + CO2. With respect to regulation, stimulated by lipoic acid. Inhibited in presence of methylamine. Its function is as follows. The glycine cleavage system catalyzes the degradation of glycine. The P protein (GLDC) binds the alpha-amino group of glycine through its pyridoxal phosphate cofactor; CO(2) is released and the remaining methylamine moiety is then transferred to the lipoamide cofactor of the H protein (GCSH). This is Glycine dehydrogenase (decarboxylating), mitochondrial from Gallus gallus (Chicken).